The chain runs to 253 residues: 3-deoxy-manno-octulosonate cytidylyltransferase (253 aa).

The protein belongs to the KdsB family.

It is found in the cytoplasm. The enzyme catalyses 3-deoxy-alpha-D-manno-oct-2-ulosonate + CTP = CMP-3-deoxy-beta-D-manno-octulosonate + diphosphate. It participates in nucleotide-sugar biosynthesis; CMP-3-deoxy-D-manno-octulosonate biosynthesis; CMP-3-deoxy-D-manno-octulosonate from 3-deoxy-D-manno-octulosonate and CTP: step 1/1. The protein operates within bacterial outer membrane biogenesis; lipopolysaccharide biosynthesis. Activates KDO (a required 8-carbon sugar) for incorporation into bacterial lipopolysaccharide in Gram-negative bacteria. The polypeptide is 3-deoxy-manno-octulosonate cytidylyltransferase (Acinetobacter baumannii (strain SDF)).